We begin with the raw amino-acid sequence, 37 residues long: MVEPLLSGIVLGMIPVTLAGLFVTAYLQYRRGDQLDL.

Residues 5 to 25 (LLSGIVLGMIPVTLAGLFVTA) traverse the membrane as a helical segment.

This sequence belongs to the PetG family. As to quaternary structure, the 4 large subunits of the cytochrome b6-f complex are cytochrome b6, subunit IV (17 kDa polypeptide, PetD), cytochrome f and the Rieske protein, while the 4 small subunits are PetG, PetL, PetM and PetN. The complex functions as a dimer.

Its subcellular location is the plastid. The protein localises to the chloroplast thylakoid membrane. Component of the cytochrome b6-f complex, which mediates electron transfer between photosystem II (PSII) and photosystem I (PSI), cyclic electron flow around PSI, and state transitions. PetG is required for either the stability or assembly of the cytochrome b6-f complex. This Staurastrum punctulatum (Green alga) protein is Cytochrome b6-f complex subunit 5.